Consider the following 334-residue polypeptide: MALKKEGPEFDHDDEVLLLEPGIMLDESSADEQPSPRATPKATTSFSSKQHKHIDYTRALDATQLYLNEIGFSPLLTPEEEVHFARLAQKGDPAGRKRMIESNLRLVVKIARRYVNRGLSLLDLIEEGNLGLIRAVEKFDPERGFRFSTYATWWIRQTIERAIMNQTRTIRLPIHVVKELNVYLRAARELTHKLDHEPSPEEIANLLEKPVAEVKRMLGLNERVTSVDVSLGPDSDKTLLDTLTDDRPTDPCELLQDDDLSESIDQWLTELTDKQREVVIRRFGLRGHESSTLEEVGQEIGLTRERVRQIQVEALKRLREILEKNGLSSDALFQ.

The disordered stretch occupies residues 21–50 (PGIMLDESSADEQPSPRATPKATTSFSSKQ). The sigma-70 factor domain-1 stretch occupies residues 61–94 (DATQLYLNEIGFSPLLTPEEEVHFARLAQKGDPA). Residues 99-169 (MIESNLRLVV…ERAIMNQTRT (71 aa)) are sigma-70 factor domain-2. Residues 123-126 (DLIE) carry the Interaction with polymerase core subunit RpoC motif. Residues 179 to 254 (ELNVYLRAAR…DDRPTDPCEL (76 aa)) are sigma-70 factor domain-3. Residues 267 to 320 (WLTELTDKQREVVIRRFGLRGHESSTLEEVGQEIGLTRERVRQIQVEALKRLRE) are sigma-70 factor domain-4. The H-T-H motif DNA-binding region spans 293–312 (LEEVGQEIGLTRERVRQIQV).

Belongs to the sigma-70 factor family. RpoS subfamily. As to quaternary structure, interacts with the RNA polymerase core enzyme.

Its subcellular location is the cytoplasm. In terms of biological role, sigma factors are initiation factors that promote the attachment of RNA polymerase to specific initiation sites and are then released. This sigma factor is the master transcriptional regulator of the stationary phase and the general stress response. In Pseudomonas aeruginosa (strain ATCC 15692 / DSM 22644 / CIP 104116 / JCM 14847 / LMG 12228 / 1C / PRS 101 / PAO1), this protein is RNA polymerase sigma factor RpoS.